The chain runs to 358 residues: MASQVSAVDDILSEYHGLEQQMADPELHNDAAAARRVGKRYSELQPIINVHRDLVSAQEDLEAAREMAHEDHEFQAEAERLEVEVVELEEKLADLLAPRDPHDGEDIVMEIKAGAGGEEAALFAGDLLRMYQKFADKHGFVVEVLDSAESDLGGVKDITLSIRSRQPSRDGAWSQFKFEGGVHRVQRVPVTESQGRIQTSAAGVLVYPEPDEVENVEIDEKDIRVDVYRSSGKGGQGVNTTDSAVRITHLPTGLVVTCQKERSQIQNRARAMQVLAARLQAMKEEEAAAEAATGRAAQIRTMDRSERIRTYNWPENRISDHRIGFKANNLDSVLDGELDDLFTALQAAERAERLEAEG.

At Gln-236 the chain carries N5-methylglutamine.

The protein belongs to the prokaryotic/mitochondrial release factor family. Post-translationally, methylated by PrmC. Methylation increases the termination efficiency of RF1.

The protein localises to the cytoplasm. In terms of biological role, peptide chain release factor 1 directs the termination of translation in response to the peptide chain termination codons UAG and UAA. The chain is Peptide chain release factor 1 from Corynebacterium glutamicum (strain ATCC 13032 / DSM 20300 / JCM 1318 / BCRC 11384 / CCUG 27702 / LMG 3730 / NBRC 12168 / NCIMB 10025 / NRRL B-2784 / 534).